We begin with the raw amino-acid sequence, 365 residues long: Putrescine 2-hydroxylase (365 aa).

One can recognise a Rieske domain in the interval 44-141 (GHELMVPEVG…LQNWNGLLFE (98 aa)). [2Fe-2S] cluster contacts are provided by Cys81, His83, Cys100, and His103.

This sequence belongs to the bacterial ring-hydroxylating dioxygenase alpha subunit family. The cofactor is [2Fe-2S] cluster.

Functionally, rieske-type iron sulfur protein that can catalyze in vitro the 2-hydroxylation of putrescine, forming 2-hydroxyputrescine. May be involved in the biosynthesis of the cyclic hydroxamate siderophore alcaligin. In Ralstonia nicotianae (strain ATCC BAA-1114 / GMI1000) (Ralstonia solanacearum), this protein is Putrescine 2-hydroxylase.